A 367-amino-acid chain; its full sequence is 4-hydroxy-3-methylbut-2-en-1-yl diphosphate synthase (flavodoxin) (367 aa).

Residues C268, C271, C303, and E310 each coordinate [4Fe-4S] cluster.

Belongs to the IspG family. [4Fe-4S] cluster serves as cofactor.

It catalyses the reaction (2E)-4-hydroxy-3-methylbut-2-enyl diphosphate + oxidized [flavodoxin] + H2O + 2 H(+) = 2-C-methyl-D-erythritol 2,4-cyclic diphosphate + reduced [flavodoxin]. Its pathway is isoprenoid biosynthesis; isopentenyl diphosphate biosynthesis via DXP pathway; isopentenyl diphosphate from 1-deoxy-D-xylulose 5-phosphate: step 5/6. Converts 2C-methyl-D-erythritol 2,4-cyclodiphosphate (ME-2,4cPP) into 1-hydroxy-2-methyl-2-(E)-butenyl 4-diphosphate. The sequence is that of 4-hydroxy-3-methylbut-2-en-1-yl diphosphate synthase (flavodoxin) from Halalkalibacterium halodurans (strain ATCC BAA-125 / DSM 18197 / FERM 7344 / JCM 9153 / C-125) (Bacillus halodurans).